Here is a 377-residue protein sequence, read N- to C-terminus: Guanine nucleotide-binding protein subunit beta (377 aa).

WD repeat units lie at residues 63 to 93 (GHTGKVYSLDWTPERNRIVSASQDGRLIVWN), 105 to 135 (LPCAWVMTCAFSPNGQSVACGGLDSVCSIFS), 154 to 185 (GHRGYVSCCQYVPNEDAHLITSSGDQTCILWD), 202 to 233 (GHTADVLSVSISGSNPNWFISGSCDSTARLWD), 246 to 276 (GHEGDVNTVKFFPDGYRFGTGSDDGTCRLYD), 292 to 323 (GENGPVTSIAFSVSGRLLFAGYASNNTCYVWD), and 339 to 369 (SHRNRISCLGLSADGSALCTGSWDSNLKIWA). 2 consecutive short sequence motifs (DWD box) follow at residues 220–235 (FISGSCDSTARLWDTR) and 263–278 (FGTGSDDGTCRLYDIR).

The protein belongs to the WD repeat G protein beta family. In terms of assembly, g proteins are composed of 3 units, alpha, beta and gamma. Interacts with the gamma subunits GG1 and GG2. The dimers GB1-GG1 and GB1-GG2 interact with NDL1, NDL2 and NDL3. Interacts with WNK8. Interacts with XLG2. Interacts with RACK1A, RACK1B and RACK1C. Interacts with ZAR1 (via GBeta-binding domain). As to expression, expressed in seedlings (especially at the hypocotyl/root junction), roots, leaves (restricted to veins and guard cells), and flowers. Also present in hydathods. Expressed in guard cells, mesophyll tissue of cotyledons, trichomes and whole siliques, but not in seeds.

It localises to the cell membrane. The protein localises to the cytoplasm. The protein resides in the nucleus. In terms of biological role, guanine nucleotide-binding proteins (G proteins) are involved as a modulator or transducer in various transmembrane signaling systems. The beta and gamma chains are required for the GTPase activity, for replacement of GDP by GTP, and for G protein-effector interaction. The heterotrimeric G-protein controls defense responses to necrotrophic and vascular fungi probably by modulating cell wall-related genes expression (e.g. lower xylose content in cell walls); involved in resistance to fungal pathogens such as Alternaria brassicicola and Fusarium oxysporum. Modulates root architecture (e.g. lateral root formation). Acts with XGL3 in the positive regulation of root waving and root skewing. Involved in the asymmetric division of zygote and specification of apical and basal cell lineages. In Arabidopsis thaliana (Mouse-ear cress), this protein is Guanine nucleotide-binding protein subunit beta (GB1).